The chain runs to 383 residues: Lipid-A-disaccharide synthase (383 aa).

This sequence belongs to the LpxB family.

It carries out the reaction a lipid X + a UDP-2-N,3-O-bis[(3R)-3-hydroxyacyl]-alpha-D-glucosamine = a lipid A disaccharide + UDP + H(+). It functions in the pathway bacterial outer membrane biogenesis; LPS lipid A biosynthesis. Its function is as follows. Condensation of UDP-2,3-diacylglucosamine and 2,3-diacylglucosamine-1-phosphate to form lipid A disaccharide, a precursor of lipid A, a phosphorylated glycolipid that anchors the lipopolysaccharide to the outer membrane of the cell. The polypeptide is Lipid-A-disaccharide synthase (Myxococcus xanthus (strain DK1622)).